The primary structure comprises 548 residues: MAIQQQPMTEPVGIPVIILKEGTQRSYGREALRANIMAVRAIAQILKTTYGPKGMDKMLVDSLGDITITNNGATILDKMDVAHPAAKMLVQISKGQEDEAGDGTKTTVIFAGELLKEAEKLLDINIHPTIIVEGYKEALRKASEVIESIAEPVSYDDVEKLKLIAKTSLNSKAVAEARDYFAELAVEAVRTVAERRGDRWYVDLNNIQIVKKHGGSLRDTRLVRGIVLDKEVVHPDMPRRVENARIALLDTPLEIEKPEIDLEISITSPEQIKALYEKQERILQEKIEKIAATGANVVITQKGIDDVAQHFLAKKGILAVRRVKRSDIEKIARATGARIVTDIEDLRPEDLGYAELVEERKVGEDKMVFIEGAKNPKSVTILLRGGFERLVDEAERSLHDALSVVADAIMDGKIVAGGGAVEAEVAKVLYEYASKLPGKTQLAVEAFARAVEALPQALAHNAGHDPIEVLVKLRSAHEKPENKWYGVDLDTGEIVDMWSRGVLEPMRVKLNALKAATEVASLILRIDDVIAARKEEEEKEEKRGGEEE.

Belongs to the TCP-1 chaperonin family. In terms of assembly, forms a Heterooligomeric complex of two stacked eight-membered rings.

In terms of biological role, molecular chaperone; binds unfolded polypeptides in vitro, and has a weak ATPase activity. The protein is Thermosome subunit beta (thsB) of Aeropyrum pernix (strain ATCC 700893 / DSM 11879 / JCM 9820 / NBRC 100138 / K1).